Here is a 396-residue protein sequence, read N- to C-terminus: Penicillopepsin-1 (396 aa).

The signal sequence occupies residues 1 to 20; it reads MVVFSKVTASLACFSAVVSA. Positions 21 to 72 are cleaved as a propeptide — activation peptide; that stretch reads AAVPVKSPRQGFSVNQVQKTVTGTRTVNLPGVYANALAKYGATVPANVHAAA. The 306-residue stretch at 88-393 folds into the Peptidase A1 domain; that stretch reads YLTPVKIGES…DAEGPRLGFA (306 aa). Active-site residues include Asp104 and Asp285. Asn311 carries an N-linked (GlcNAc...) asparagine glycan. Cys321 and Cys356 are disulfide-bonded.

Belongs to the peptidase A1 family. In terms of assembly, monomer.

It localises to the secreted. The enzyme catalyses Hydrolysis of proteins with broad specificity similar to that of pepsin A, preferring hydrophobic residues at P1 and P1', but also cleaving 20-Gly-|-Glu-21 in the B chain of insulin. Clots milk, and activates trypsinogen.. In terms of biological role, secreted aspartic endopeptidase that allows assimilation of proteinaceous substrates. The scissile peptide bond is attacked by a nucleophilic water molecule activated by two aspartic residues in the active site. Shows a broad primary substrate specificity. Favors hydrophobic residues at the P1 and P1' positions, but can also activate trypsinogen and hydrolyze the B chain of insulin between positions 'Gly-20' and 'Glu-21'. The polypeptide is Penicillopepsin-1 (pepA) (Penicillium rubens (strain ATCC 28089 / DSM 1075 / NRRL 1951 / Wisconsin 54-1255) (Penicillium chrysogenum)).